A 214-amino-acid polypeptide reads, in one-letter code: Small ribosomal subunit protein uS5 (214 aa).

Positions 54–117 (LRYDIVDIGI…RDAKMRIIPV (64 aa)) constitute an S5 DRBM domain.

It belongs to the universal ribosomal protein uS5 family. As to quaternary structure, part of the 30S ribosomal subunit. Contacts protein S4.

With S4 and S12 plays an important role in translational accuracy. The chain is Small ribosomal subunit protein uS5 from Sulfolobus acidocaldarius (strain ATCC 33909 / DSM 639 / JCM 8929 / NBRC 15157 / NCIMB 11770).